Reading from the N-terminus, the 246-residue chain is ATP synthase subunit a (246 aa).

Positions 1 to 3 (MFY) are cleaved as a propeptide — removed in mature form. Helical transmembrane passes span 20–40 (ILTLALTNYTLYLIIVVSIIF), 56–76 (WGVAIIAIYDTILNLVYSQIG), 82–102 (FFPLIFTIFNLIFAANLISMI), 112–132 (LVAIVSFSLALWIGNVILGLY), 138–158 (FFALFVPSGTPLPLVPILVLI), 176–196 (ANILSGHLLMLILGSLIVNLM), and 203–223 (FIGGIVPIVAVIAITILEVGI).

Belongs to the ATPase A chain family. F-type ATPases have 2 components, CF(1) - the catalytic core - and CF(0) - the membrane proton channel. CF(1) has five subunits: alpha(3), beta(3), gamma(1), delta(1), epsilon(1). CF(0) has three main subunits: a, b and c.

The protein localises to the mitochondrion inner membrane. Functionally, mitochondrial membrane ATP synthase (F(1)F(0) ATP synthase or Complex V) produces ATP from ADP in the presence of a proton gradient across the membrane which is generated by electron transport complexes of the respiratory chain. F-type ATPases consist of two structural domains, F(1) - containing the extramembraneous catalytic core and F(0) - containing the membrane proton channel, linked together by a central stalk and a peripheral stalk. During catalysis, ATP synthesis in the catalytic domain of F(1) is coupled via a rotary mechanism of the central stalk subunits to proton translocation. Key component of the proton channel; it may play a direct role in the translocation of protons across the membrane. The chain is ATP synthase subunit a (ATP6) from Candida albicans (strain SC5314 / ATCC MYA-2876) (Yeast).